The chain runs to 462 residues: Hemopexin (462 aa).

Residues 1–23 (MARVLGAPVALGLWSLCWSLAIA) form the signal peptide. Thr-24 and Thr-29 each carry an O-linked (GalNAc...) threonine glycan. Residues 29–48 (TSAHGNVAEGETKPDPDVTE) form a disordered region. Positions 30–40 (SAHGNVAEGET) are O-glycosylated at one site. Residues 38-48 (GETKPDPDVTE) are compositionally biased toward basic and acidic residues. 3 cysteine pairs are disulfide-bonded: Cys-50–Cys-231, Cys-149–Cys-154, and Cys-188–Cys-200. Hemopexin repeat units follow at residues 53 to 93 (GWSF…WKNF), 94 to 139 (PSPV…FPGI), 140 to 184 (PSPL…SWPA), and 185 to 231 (VGNC…FMPC). Asn-64 carries an N-linked (GlcNAc...) (complex) asparagine glycan. Residue His-79 coordinates heme. His-150 provides a ligand contact to heme. N-linked (GlcNAc...) (complex) asparagine glycosylation occurs at Asn-187. Residue His-236 participates in heme binding. Asn-240 and Asn-246 each carry an N-linked (GlcNAc...) asparagine glycan. Intrachain disulfides connect Cys-257/Cys-460, Cys-366/Cys-408, and Cys-418/Cys-435. Hemopexin repeat units follow at residues 259–304 (PHLV…WPQG), 305–352 (PSAV…VGTP), 357–396 (LDSVDAAFICPGSSRLHIMAGRRLWWLDLKSGAQATWTEL), and 400–450 (HEKV…ALPQ). His-293 serves as a coordination point for heme. Asn-453 carries an N-linked (GlcNAc...) (complex) asparagine glycan.

The protein belongs to the hemopexin family. In terms of assembly, interacts with FLVCR1. As to quaternary structure, (Microbial infection) Interacts with hepatitis E virus/HEV protein ORF3. In terms of processing, N- and O-glycosylated. O-glycosylated with core 1 or possibly core 8 glycans. O-glycosylation in the 30-40 region is minor compared to glycosylation at Thr-24 and Thr-29. In terms of tissue distribution, expressed by the liver and secreted in plasma.

It is found in the secreted. Functionally, binds heme and transports it to the liver for breakdown and iron recovery, after which the free hemopexin returns to the circulation. The protein is Hemopexin (HPX) of Homo sapiens (Human).